We begin with the raw amino-acid sequence, 297 residues long: MRLEAKTKLSSKAKEPINVVKYNRTGKYVLAAGNERVVRLWNVKSGACIHEYAGHGHEILDLDLVYDSTKFASCGGDKFIQVWDVNTGKVDRRLGGHLAQINTIRYNEDSSILASGSFDSKVRLWDCRSNSFSPIQVLADAKDSVSSIDIAEHLIVTGSTDGTLRTYDIRKGTLSSDYFSHPITSVKTSKSASFSLISSLNSSIHLLDQETGKILKSYIGLKNMEYRVRSSFNQSETIVFSGSEDGKVYLWDLENETQITSTSVVGTPIVTDISCHPTMDDFIIATVHGDLFIYQYN.

WD repeat units lie at residues 12 to 51, 54 to 93, 96 to 135, 140 to 177, 179 to 217, 222 to 261, and 265 to 297; these read KAKE…CIHE, GHGH…VDRR, GHLA…FSPI, DAKD…LSSD, FSHP…ILKS, KNME…QITS, and VGTP…YQYN.

It belongs to the WD repeat MORG1 family.

The protein localises to the cytoplasm. It is found in the nucleus. This is an uncharacterized protein from Schizosaccharomyces pombe (strain 972 / ATCC 24843) (Fission yeast).